Here is a 268-residue protein sequence, read N- to C-terminus: Tryptophan synthase alpha chain (268 aa).

Residues E49 and D60 each act as proton acceptor in the active site.

This sequence belongs to the TrpA family. Tetramer of two alpha and two beta chains.

The enzyme catalyses (1S,2R)-1-C-(indol-3-yl)glycerol 3-phosphate + L-serine = D-glyceraldehyde 3-phosphate + L-tryptophan + H2O. Its pathway is amino-acid biosynthesis; L-tryptophan biosynthesis; L-tryptophan from chorismate: step 5/5. Its function is as follows. The alpha subunit is responsible for the aldol cleavage of indoleglycerol phosphate to indole and glyceraldehyde 3-phosphate. The protein is Tryptophan synthase alpha chain of Escherichia coli O6:H1 (strain CFT073 / ATCC 700928 / UPEC).